A 690-amino-acid chain; its full sequence is Polyribonucleotide nucleotidyltransferase (690 aa).

Positions 482 and 488 each coordinate Mg(2+). One can recognise a KH domain in the interval 549-608 (PRIITIQINPDRIRDVIGPGGKVIRALTEETGATIDIQDNGTVTIASVDGEAGAAAKRRI). The region spanning 618–686 (DTIYDGKVAK…RQGKIKLSMK (69 aa)) is the S1 motif domain.

This sequence belongs to the polyribonucleotide nucleotidyltransferase family. Component of the RNA degradosome, which is a multiprotein complex involved in RNA processing and mRNA degradation. The cofactor is Mg(2+).

It is found in the cytoplasm. The catalysed reaction is RNA(n+1) + phosphate = RNA(n) + a ribonucleoside 5'-diphosphate. Functionally, involved in mRNA degradation. Catalyzes the phosphorolysis of single-stranded polyribonucleotides processively in the 3'- to 5'-direction. The sequence is that of Polyribonucleotide nucleotidyltransferase from Acidithiobacillus ferrooxidans (strain ATCC 23270 / DSM 14882 / CIP 104768 / NCIMB 8455) (Ferrobacillus ferrooxidans (strain ATCC 23270)).